The primary structure comprises 122 residues: Large ribosomal subunit protein uL14 (122 aa).

Belongs to the universal ribosomal protein uL14 family. In terms of assembly, part of the 50S ribosomal subunit. Forms a cluster with proteins L3 and L19. In the 70S ribosome, L14 and L19 interact and together make contacts with the 16S rRNA in bridges B5 and B8.

Its function is as follows. Binds to 23S rRNA. Forms part of two intersubunit bridges in the 70S ribosome. The polypeptide is Large ribosomal subunit protein uL14 (Nitratidesulfovibrio vulgaris (strain ATCC 29579 / DSM 644 / CCUG 34227 / NCIMB 8303 / VKM B-1760 / Hildenborough) (Desulfovibrio vulgaris)).